The following is a 426-amino-acid chain: Enolase (426 aa).

Residue Q162 coordinates (2R)-2-phosphoglycerate. E204 serves as the catalytic Proton donor. The Mg(2+) site is built by D241, E284, and D311. The (2R)-2-phosphoglycerate site is built by K336, R365, S366, and K387. K336 serves as the catalytic Proton acceptor.

It belongs to the enolase family. Requires Mg(2+) as cofactor.

The protein localises to the cytoplasm. It is found in the secreted. Its subcellular location is the cell surface. The enzyme catalyses (2R)-2-phosphoglycerate = phosphoenolpyruvate + H2O. It participates in carbohydrate degradation; glycolysis; pyruvate from D-glyceraldehyde 3-phosphate: step 4/5. Catalyzes the reversible conversion of 2-phosphoglycerate (2-PG) into phosphoenolpyruvate (PEP). It is essential for the degradation of carbohydrates via glycolysis. This Acidithiobacillus ferrooxidans (strain ATCC 23270 / DSM 14882 / CIP 104768 / NCIMB 8455) (Ferrobacillus ferrooxidans (strain ATCC 23270)) protein is Enolase.